The following is a 145-amino-acid chain: 5-hydroxymethyl-dUMP N-hydrolase (145 aa).

5-hydroxymethyl-dUMP is bound by residues G7, I9, R10, G11, S79, G81, E85, and S109.

It belongs to the 2'-deoxynucleoside 5'-phosphate N-hydrolase 1 family. As to quaternary structure, monomer and homodimer.

It localises to the cytoplasm. The protein resides in the nucleus. The enzyme catalyses 5-hydroxymethyl-dUMP + H2O = 5-hydroxymethyluracil + 2-deoxy-D-ribose 5-phosphate. Its function is as follows. Part of a nucleotide salvage pathway that eliminates epigenetically modified 5-hydroxymethyl-dCMP (hmdCMP) in a two-step process entailing deamination to cytotoxic 5-hydroxymethyl-dUMP (hmdUMP), followed by its hydrolysis into 5-hydroxymethyluracil (hmU) and 2-deoxy-D-ribose 5-phosphate (deoxyribosephosphate). Catalyzes the second step in that pathway, the hydrolysis of the N-glycosidic bond in hmdUMP, degrading this cytotoxic nucleotide to avoid its genomic integration. The chain is 5-hydroxymethyl-dUMP N-hydrolase from Esox lucius (Northern pike).